The following is a 293-amino-acid chain: N-acetylneuraminate lyase (293 aa).

Residues serine 48 and serine 49 each coordinate aceneuramate. Tyrosine 137 (proton donor) is an active-site residue. Residue lysine 165 is the Schiff-base intermediate with substrate of the active site. Aceneuramate-binding residues include threonine 167, glycine 189, aspartate 191, glutamate 192, and serine 208.

Belongs to the DapA family. NanA subfamily. In terms of assembly, homotetramer.

It localises to the cytoplasm. It carries out the reaction aceneuramate = aldehydo-N-acetyl-D-mannosamine + pyruvate. Its pathway is amino-sugar metabolism; N-acetylneuraminate degradation; D-fructose 6-phosphate from N-acetylneuraminate: step 1/5. Catalyzes the reversible aldol cleavage of N-acetylneuraminic acid (sialic acid; Neu5Ac) to form pyruvate and N-acetylmannosamine (ManNAc) via a Schiff base intermediate. The chain is N-acetylneuraminate lyase from Staphylococcus aureus (strain bovine RF122 / ET3-1).